A 188-amino-acid polypeptide reads, in one-letter code: Small ribosomal subunit protein uS7 (188 aa).

Belongs to the universal ribosomal protein uS7 family. Part of the 30S ribosomal subunit.

In terms of biological role, one of the primary rRNA binding proteins, it binds directly to 16S rRNA where it nucleates assembly of the head domain of the 30S subunit. Is located at the subunit interface close to the decoding center. This is Small ribosomal subunit protein uS7 from Methanococcus maripaludis (strain DSM 14266 / JCM 13030 / NBRC 101832 / S2 / LL).